The sequence spans 296 residues: Tubulin polyglutamylase complex subunit 2 (296 aa).

Residues 254–265 (SKNKILIPKKKG) are compositionally biased toward basic residues. Residues 254-296 (SKNKILIPKKKGPVPPASGQKGPGPLPPPTSKPTTGSGNPVRK) form a disordered region. Positions 285–296 (KPTTGSGNPVRK) are enriched in low complexity.

As to quaternary structure, part of the neuronal tubulin polyglutamylase complex which contains TPGS1, TPGS2, TTLL1, LRRC49 and NICN1. Interacts with CSTPP1 and LRRC49.

The protein resides in the cytoplasm. It localises to the cytoskeleton. It is found in the microtubule organizing center. Its subcellular location is the centrosome. The protein localises to the centriolar satellite. Functionally, subunit of the tubulin polyglutamylase complex (TPGC). The complex mediates cilia and flagella polyglutamylation which is essential for their biogenesis and motility. The sequence is that of Tubulin polyglutamylase complex subunit 2 (Tpgs2) from Mus musculus (Mouse).